A 574-amino-acid polypeptide reads, in one-letter code: K(+)/H(+) antiporter NhaP2 (574 aa).

The next 13 helical transmembrane spans lie at 6–26 (INSFFLIGALLAAVSVLLSPV), 34–54 (ILLIFLAVGILAGEDGPGGIL), 58–78 (YSTAYLVSNLALAIILLDGGM), 87–107 (VALWPALSLATFGVAITTSIT), 109–129 (VMAAWLFDLHWLQGLLVGAIV), 173–193 (IAILANVDAELSVSFMLISFI), 196–216 (FGLGIFLGLGGGWLLWKLVNL), 219–239 (LAEGLYSILVLSGGLMIYAAS), 242–262 (LGGSGILSIYLVGLFLGNKPT), 271–291 (VLDGMTWVSQIGMFLVLGLLL), 299–319 (IWLPGLALAFGMILFARPLAV), 335–355 (WFISWVGLRGAVPIILAVFPM), and 359–379 (LPGAQLYFNLAFFVVLVSLLV). Residues 405 to 486 (SGVEIYPSSE…LEALSNLFSQ (82 aa)) enclose the RCK C-terminal domain.

This sequence belongs to the monovalent cation:proton antiporter 1 (CPA1) transporter (TC 2.A.36) family. NhaP2 subfamily.

Its subcellular location is the cell inner membrane. The catalysed reaction is K(+)(in) + H(+)(out) = K(+)(out) + H(+)(in). Functionally, k(+)/H(+) antiporter that extrudes potassium in exchange for external protons and maintains the internal concentration of potassium under toxic levels. This is K(+)/H(+) antiporter NhaP2 from Shewanella sp. (strain ANA-3).